The sequence spans 328 residues: tRNA dimethylallyltransferase (328 aa).

ATP is bound at residue 10–17; it reads GPTASGKT. Position 12–17 (12–17) interacts with substrate; that stretch reads TASGKT.

The protein belongs to the IPP transferase family. As to quaternary structure, monomer. The cofactor is Mg(2+).

It catalyses the reaction adenosine(37) in tRNA + dimethylallyl diphosphate = N(6)-dimethylallyladenosine(37) in tRNA + diphosphate. In terms of biological role, catalyzes the transfer of a dimethylallyl group onto the adenine at position 37 in tRNAs that read codons beginning with uridine, leading to the formation of N6-(dimethylallyl)adenosine (i(6)A). This is tRNA dimethylallyltransferase from Bifidobacterium longum (strain NCC 2705).